A 544-amino-acid polypeptide reads, in one-letter code: Chaperonin GroEL (544 aa).

ATP is bound by residues 29–32, Lys-50, 86–90, Gly-414, 479–481, and Asp-495; these read TLGP, DGTTT, and DAA.

The protein belongs to the chaperonin (HSP60) family. As to quaternary structure, forms a cylinder of 14 subunits composed of two heptameric rings stacked back-to-back. Interacts with the co-chaperonin GroES.

The protein localises to the cytoplasm. The catalysed reaction is ATP + H2O + a folded polypeptide = ADP + phosphate + an unfolded polypeptide.. In terms of biological role, together with its co-chaperonin GroES, plays an essential role in assisting protein folding. The GroEL-GroES system forms a nano-cage that allows encapsulation of the non-native substrate proteins and provides a physical environment optimized to promote and accelerate protein folding. This Treponema denticola (strain ATCC 35405 / DSM 14222 / CIP 103919 / JCM 8153 / KCTC 15104) protein is Chaperonin GroEL.